The following is a 159-amino-acid chain: Transcription antitermination protein NusB (159 aa).

Belongs to the NusB family.

Functionally, involved in transcription antitermination. Required for transcription of ribosomal RNA (rRNA) genes. Binds specifically to the boxA antiterminator sequence of the ribosomal RNA (rrn) operons. In Xanthomonas axonopodis pv. citri (strain 306), this protein is Transcription antitermination protein NusB.